We begin with the raw amino-acid sequence, 245 residues long: Orotidine 5'-phosphate decarboxylase (245 aa).

Residues D22, K44, 71-80 (DLKFHDIPNT), T131, R192, Q201, G221, and R222 contribute to the substrate site. The Proton donor role is filled by K73.

This sequence belongs to the OMP decarboxylase family. Type 1 subfamily. Homodimer.

It catalyses the reaction orotidine 5'-phosphate + H(+) = UMP + CO2. The protein operates within pyrimidine metabolism; UMP biosynthesis via de novo pathway; UMP from orotate: step 2/2. Functionally, catalyzes the decarboxylation of orotidine 5'-monophosphate (OMP) to uridine 5'-monophosphate (UMP). The chain is Orotidine 5'-phosphate decarboxylase from Escherichia coli O127:H6 (strain E2348/69 / EPEC).